The primary structure comprises 359 residues: Putative gluconeogenesis factor (359 aa).

Residues 317-359 form a disordered region; the sequence is VGNQDSSAPTVAATEQIRLDGKRPQTGVNGPVGKGPRGDDAWR.

This sequence belongs to the gluconeogenesis factor family.

Its subcellular location is the cytoplasm. In terms of biological role, required for morphogenesis under gluconeogenic growth conditions. This chain is Putative gluconeogenesis factor, found in Mycobacterium leprae (strain TN).